Reading from the N-terminus, the 294-residue chain is 4-hydroxy-tetrahydrodipicolinate synthase (294 aa).

A pyruvate-binding site is contributed by Thr47. Tyr135 functions as the Proton donor/acceptor in the catalytic mechanism. Lys163 functions as the Schiff-base intermediate with substrate in the catalytic mechanism. Pyruvate is bound at residue Ile205.

Belongs to the DapA family. As to quaternary structure, homotetramer; dimer of dimers.

The protein localises to the cytoplasm. It catalyses the reaction L-aspartate 4-semialdehyde + pyruvate = (2S,4S)-4-hydroxy-2,3,4,5-tetrahydrodipicolinate + H2O + H(+). It functions in the pathway amino-acid biosynthesis; L-lysine biosynthesis via DAP pathway; (S)-tetrahydrodipicolinate from L-aspartate: step 3/4. Catalyzes the condensation of (S)-aspartate-beta-semialdehyde [(S)-ASA] and pyruvate to 4-hydroxy-tetrahydrodipicolinate (HTPA). The sequence is that of 4-hydroxy-tetrahydrodipicolinate synthase from Rickettsia prowazekii (strain Madrid E).